A 144-amino-acid polypeptide reads, in one-letter code: Large ribosomal subunit protein uL16 (144 aa).

It belongs to the universal ribosomal protein uL16 family. In terms of assembly, part of the 50S ribosomal subunit.

Its function is as follows. Binds 23S rRNA and is also seen to make contacts with the A and possibly P site tRNAs. The sequence is that of Large ribosomal subunit protein uL16 from Pediococcus pentosaceus (strain ATCC 25745 / CCUG 21536 / LMG 10740 / 183-1w).